We begin with the raw amino-acid sequence, 178 residues long: GPI mannosyltransferase 2 subunit C167.09 (178 aa).

Residues 1-20 form the signal peptide; it reads MREFRLIFVLLFFLPSFAIA. Over 21 to 152 the chain is Lumenal; the sequence is NTEIINVETG…LGFLPKSVLP (132 aa). N-linked (GlcNAc...) asparagine glycosylation is found at Asn-48, Asn-49, Asn-106, Asn-115, and Asn-122. A helical transmembrane segment spans residues 153–173; sequence IVGFVFVIILIALICMTNLFI. Topologically, residues 174–178 are cytoplasmic; sequence KHKRD.

As to quaternary structure, part of the GPI mannosyltransferase 2 complex composed of gpi18 and C167.09.

It localises to the endoplasmic reticulum membrane. It functions in the pathway glycolipid biosynthesis; glycosylphosphatidylinositol-anchor biosynthesis. In terms of biological role, essential component of the GPI mannosyltransferase 2 complex. Responsible for the transfer of the second mannose to the glycosylphosphatidylinositol during GPI precursor assembly. This chain is GPI mannosyltransferase 2 subunit C167.09, found in Schizosaccharomyces pombe (strain 972 / ATCC 24843) (Fission yeast).